The following is a 299-amino-acid chain: Sulfate adenylyltransferase subunit 2 (299 aa).

It belongs to the PAPS reductase family. CysD subfamily. As to quaternary structure, heterodimer composed of CysD, the smaller subunit, and CysN.

The catalysed reaction is sulfate + ATP + H(+) = adenosine 5'-phosphosulfate + diphosphate. The protein operates within sulfur metabolism; hydrogen sulfide biosynthesis; sulfite from sulfate: step 1/3. In terms of biological role, with CysN forms the ATP sulfurylase (ATPS) that catalyzes the adenylation of sulfate producing adenosine 5'-phosphosulfate (APS) and diphosphate, the first enzymatic step in sulfur assimilation pathway. APS synthesis involves the formation of a high-energy phosphoric-sulfuric acid anhydride bond driven by GTP hydrolysis by CysN coupled to ATP hydrolysis by CysD. In Colwellia psychrerythraea (strain 34H / ATCC BAA-681) (Vibrio psychroerythus), this protein is Sulfate adenylyltransferase subunit 2.